The primary structure comprises 376 residues: PqqA peptide cyclase (376 aa).

In terms of domain architecture, Radical SAM core spans 4–219 (VPPPLSVLLE…VETARRSLGD (216 aa)). Positions 18, 22, and 25 each coordinate [4Fe-4S] cluster.

It belongs to the radical SAM superfamily. PqqE family. Interacts with PqqD. The interaction is necessary for activity of PqqE. The cofactor is [4Fe-4S] cluster.

The catalysed reaction is [PQQ precursor protein] + S-adenosyl-L-methionine = E-Y cross-linked-[PQQ precursor protein] + 5'-deoxyadenosine + L-methionine + H(+). The protein operates within cofactor biosynthesis; pyrroloquinoline quinone biosynthesis. Its function is as follows. Catalyzes the cross-linking of a glutamate residue and a tyrosine residue in the PqqA protein as part of the biosynthesis of pyrroloquinoline quinone (PQQ). This chain is PqqA peptide cyclase, found in Xanthomonas campestris pv. campestris (strain 8004).